The sequence spans 147 residues: Endoribonuclease YbeY (147 aa).

Residues H111, H115, and D121 each coordinate Zn(2+).

This sequence belongs to the endoribonuclease YbeY family. Requires Zn(2+) as cofactor.

It is found in the cytoplasm. Its function is as follows. Single strand-specific metallo-endoribonuclease involved in late-stage 70S ribosome quality control and in maturation of the 3' terminus of the 16S rRNA. This chain is Endoribonuclease YbeY, found in Amoebophilus asiaticus (strain 5a2).